Reading from the N-terminus, the 1417-residue chain is Cytoadherence-linked asexual protein 3.1 (1417 aa).

The signal sequence occupies residues 1-24; sequence MVSFFKTPIFILIIFLYLNEKVIC. 4 disulfides stabilise this stretch: Cys-333–Cys-361, Cys-407–Cys-413, Cys-517–Cys-545, and Cys-521–Cys-542. The helical transmembrane segment at 1204-1224 threads the bilayer; sequence LVNGFMYAFCFFAISQMYAYF. The tract at residues 1383-1417 is disordered; the sequence is TYIDTEKMNEADSADSDDEKDSDTPDDELMISRFH. Residues 1394–1411 show a composition bias toward acidic residues; that stretch reads DSADSDDEKDSDTPDDEL.

As to quaternary structure, self-associates. Component of the RhopH complex. RhopH complex is at least composed of CLAG3.1/CLAG3.2, RhopH2 and RhopH3 with a 1:1:1 subunit stoichiometry. CLAG3.1/CLAG3.2 mediates subunit association through independent contacts with RhopH2 and RhopH3, which do not directly interact with one another. Interacts with RhopH2. Interacts with RhopH3.

Its subcellular location is the host cell membrane. It is found in the host cytoplasm. The protein resides in the cytoplasmic vesicle. The protein localises to the secretory vesicle. It localises to the rhoptry. Participates in the formation of new permeability pathways in Plasmodium-infected erythrocytes enabling the uptake of nutrients from the blood plasma. This Plasmodium falciparum (isolate 3D7) protein is Cytoadherence-linked asexual protein 3.1.